The chain runs to 65 residues: SCOCO-like protein 1 (65 aa).

Residues 8–44 are a coiled coil; sequence RSLMEQKAMELQQQLQALLDEIDQNKQESENISRESE.

It belongs to the SLO1 family.

The sequence is that of SCOCO-like protein 1 from Schizosaccharomyces pombe (strain 972 / ATCC 24843) (Fission yeast).